Consider the following 62-residue polypeptide: Protein YnfQ (62 aa).

It belongs to the YmcF/YnqF peptide family.

This Escherichia coli (strain K12) protein is Protein YnfQ.